Consider the following 226-residue polypeptide: Peroxynitrite isomerase (226 aa).

Residues 21–27 (GSWEGQG) carry the GXWXGXG motif. H191 is a heme b binding site. The segment at 201-226 (SAAEGRLAPGAERPRGAGGRKQGEQS) is disordered.

This sequence belongs to the nitrobindin family. Homodimer. Heme b serves as cofactor.

The catalysed reaction is peroxynitrite = nitrate. The protein operates within nitrogen metabolism. Heme-binding protein able to scavenge peroxynitrite and to protect free L-tyrosine against peroxynitrite-mediated nitration, by acting as a peroxynitrite isomerase that converts peroxynitrite to nitrate. Therefore, this protein likely plays a role in peroxynitrite sensing and in the detoxification of reactive nitrogen and oxygen species (RNS and ROS, respectively). Is able to bind nitric oxide (NO) in vitro, but may act as a sensor of peroxynitrite levels in vivo. The sequence is that of Peroxynitrite isomerase from Micrococcus luteus (strain ATCC 4698 / DSM 20030 / JCM 1464 / CCM 169 / CCUG 5858 / IAM 1056 / NBRC 3333 / NCIMB 9278 / NCTC 2665 / VKM Ac-2230) (Micrococcus lysodeikticus).